The following is a 597-amino-acid chain: Integrator complex subunit 11 (597 aa).

Residues His-68, His-70, Asp-72, His-73, His-157, and Asp-178 each coordinate Zn(2+). Residues His-68–His-73 carry the HXHXDH motif motif. Residue Glu-203 is part of the active site. Position 414 (His-414) interacts with Zn(2+). Residue Lys-462 coordinates 1D-myo-inositol hexakisphosphate.

It belongs to the metallo-beta-lactamase superfamily. RNA-metabolizing metallo-beta-lactamase-like family. INTS11 subfamily. As to quaternary structure, belongs to the multiprotein complex Integrator, at least composed of IntS1, IntS2, IntS3, IntS4, omd/IntS5, IntS6, defl/IntS7, IntS8, IntS9, IntS10, IntS11, IntS12, asun/IntS13, IntS14 and IntS15. The core complex associates with protein phosphatase 2A subunits mts/PP2A and Pp2A-29B, to form the Integrator-PP2A (INTAC) complex. IntS11 is part of the RNA endonuclease subcomplex, composed of IntS4, IntS9, IntS11 and inositol hexakisphosphate (InsP6). Interacts with Brat1; interaction is required for the assembly of the RNA endonuclease subcomplex and inhibits the endonuclease activity of IntS11 before formation of mature integrator complex. It depends on Zn(2+) as a cofactor. Expressed in neurons and glia of the larval and adult brain.

The protein resides in the nucleus. It is found in the cytoplasm. Its subcellular location is the cytosol. The RNA endonuclease activity is inhibited by Brat1 that forms hyrogen bond and hydrophobic interactions with the active site. In terms of biological role, RNA endonuclease component of the integrator complex, a multiprotein complex that terminates RNA polymerase II (Pol II) transcription in the promoter-proximal region of genes. The integrator complex provides a quality checkpoint during transcription elongation by driving premature transcription termination of transcripts that are unfavorably configured for transcriptional elongation: the complex terminates transcription by (1) catalyzing dephosphorylation of the C-terminal domain (CTD) of Pol II subunit Polr2A/Rbp1 and Spt5, and (2) degrading the exiting nascent RNA transcript via endonuclease activity. The integrator complex is also involved in the 3'-end processing of the U7 snRNA, and also the spliceosomal snRNAs U1, U2, U4 and U5. Within the integrator complex, IntS11 constitutes the RNA endonuclease subunit that degrades exiting nascent RNA transcripts. The sequence is that of Integrator complex subunit 11 from Drosophila melanogaster (Fruit fly).